The chain runs to 471 residues: ATP synthase subunit beta (471 aa).

Gly153 to Thr160 contacts ATP.

This sequence belongs to the ATPase alpha/beta chains family. As to quaternary structure, F-type ATPases have 2 components, CF(1) - the catalytic core - and CF(0) - the membrane proton channel. CF(1) has five subunits: alpha(3), beta(3), gamma(1), delta(1), epsilon(1). CF(0) has three main subunits: a(1), b(2) and c(9-12). The alpha and beta chains form an alternating ring which encloses part of the gamma chain. CF(1) is attached to CF(0) by a central stalk formed by the gamma and epsilon chains, while a peripheral stalk is formed by the delta and b chains.

Its subcellular location is the cell inner membrane. The catalysed reaction is ATP + H2O + 4 H(+)(in) = ADP + phosphate + 5 H(+)(out). In terms of biological role, produces ATP from ADP in the presence of a proton gradient across the membrane. The catalytic sites are hosted primarily by the beta subunits. The chain is ATP synthase subunit beta from Verminephrobacter eiseniae (strain EF01-2).